Consider the following 156-residue polypeptide: Small ribosomal subunit protein uS7 (156 aa).

It belongs to the universal ribosomal protein uS7 family. As to quaternary structure, part of the 30S ribosomal subunit. Contacts proteins S9 and S11.

Its function is as follows. One of the primary rRNA binding proteins, it binds directly to 16S rRNA where it nucleates assembly of the head domain of the 30S subunit. Is located at the subunit interface close to the decoding center, probably blocks exit of the E-site tRNA. This Pediococcus pentosaceus (strain ATCC 25745 / CCUG 21536 / LMG 10740 / 183-1w) protein is Small ribosomal subunit protein uS7.